Here is a 968-residue protein sequence, read N- to C-terminus: MPFALGQRWISDTESELGLGTVVQVEGRMVTVLFPATGENRMFSRAEAPLTRVTYNSGDTVESHEGWSLTIEELTEKDGLVIYHGIHSETGEQVTLRETLLNHNIRFNKPQDRLFAGQIDRLDRFGVRYQCQMLRHKLATSDLLGLQGPRVGLIPHQMWIAHEVGRRYAPRVLLADEVGLGKTIEAGLIIHQQLLTGRAERVLVIVPDTLRHQWLVEMLRRFNLRFSVFDEDRCVEAYADHDNPFYTEQLVICSLELLRKKKRLDQALDADWDLLVVDEAHHLEWTEEAPSRAYQVVEALSEVVPGVLLLTATPDQLGHESHFARLRLLDPDRFYDYDAFLAEEDSYKDVAMAAEALAGNAKLPDAAINSLTELLSEKDIAPSIRLIQADGIDSELQQAARSELLQELLDRHGTGRVLYRNSRASVKGFPKRFFNPHPQTMPEQYLTAARVSSMMGGHKTLEAKAAQALSPEKLYQEFEDNSASWWKFDPRVDWLIAFLKSHRSKKVLIIASQAETALSLEEALRTREGIQATVFHEGMSIIERDKAGAYFAQEEGGAQALICSEIGSEGRNFQFASHLVLFDLPLNPDLLEQRIGRLDRIGQKNDIQIHLPYLEDTAQERLMQWYHQGLNAFELTCPSGHVLYAEFAEDLLNVLVGDDADELTNLLNHTQTRYKELKHAMEQGRDKLLEINSHGGDRAKAIVERLAQNDENTQLIGSVIRLWDIIGVDQEDKGENSIILRPSEHMMFPTYPGLPEDGVTVTFDRDTALSRDDIALITQEHPLVQTGLDLITGSETGTTSVAVLKNKALPAGTLFLELIYMADASAPKSSQLYRYLPPTPIRILLDKNGNDLSAKVDYASFDKQLSAVNRHIGGKLVTASQPILHPLFAKGEEYAQAAVDELVIQAREKMTTQLTGELDRLESLKAVNPNIREEELEYLRNQMQELNTYLDASQLQLDAIRMVLVSHV.

One can recognise a Helicase ATP-binding domain in the interval 163–332 (EVGRRYAPRV…FARLRLLDPD (170 aa)). 176-183 (DEVGLGKT) is an ATP binding site. The DEAH box motif lies at 278–281 (DEAH). Residues 491-643 (RVDWLIAFLK…ELTCPSGHVL (153 aa)) enclose the Helicase C-terminal domain.

Belongs to the SNF2/RAD54 helicase family. RapA subfamily. As to quaternary structure, interacts with the RNAP. Has a higher affinity for the core RNAP than for the holoenzyme. Its ATPase activity is stimulated by binding to RNAP.

Its function is as follows. Transcription regulator that activates transcription by stimulating RNA polymerase (RNAP) recycling in case of stress conditions such as supercoiled DNA or high salt concentrations. Probably acts by releasing the RNAP, when it is trapped or immobilized on tightly supercoiled DNA. Does not activate transcription on linear DNA. Probably not involved in DNA repair. This chain is RNA polymerase-associated protein RapA, found in Shewanella putrefaciens (strain CN-32 / ATCC BAA-453).